Here is a 420-residue protein sequence, read N- to C-terminus: Serine hydroxymethyltransferase (420 aa).

Residues Leu-121 and Gly-125 to Leu-127 contribute to the (6S)-5,6,7,8-tetrahydrofolate site. At Lys-230 the chain carries N6-(pyridoxal phosphate)lysine. Residues Glu-246 and Ser-354–Phe-356 each bind (6S)-5,6,7,8-tetrahydrofolate.

Belongs to the SHMT family. As to quaternary structure, homodimer. Pyridoxal 5'-phosphate serves as cofactor.

The protein resides in the cytoplasm. It catalyses the reaction (6R)-5,10-methylene-5,6,7,8-tetrahydrofolate + glycine + H2O = (6S)-5,6,7,8-tetrahydrofolate + L-serine. It functions in the pathway one-carbon metabolism; tetrahydrofolate interconversion. It participates in amino-acid biosynthesis; glycine biosynthesis; glycine from L-serine: step 1/1. Catalyzes the reversible interconversion of serine and glycine with tetrahydrofolate (THF) serving as the one-carbon carrier. This reaction serves as the major source of one-carbon groups required for the biosynthesis of purines, thymidylate, methionine, and other important biomolecules. Also exhibits THF-independent aldolase activity toward beta-hydroxyamino acids, producing glycine and aldehydes, via a retro-aldol mechanism. In Rickettsia prowazekii (strain Madrid E), this protein is Serine hydroxymethyltransferase.